Here is a 262-residue protein sequence, read N- to C-terminus: GTP cyclohydrolase 1 type 2 homolog (262 aa).

The a divalent metal cation site is built by H65, D102, H222, and E225.

It belongs to the GTP cyclohydrolase I type 2/NIF3 family. As to quaternary structure, homohexamer.

The chain is GTP cyclohydrolase 1 type 2 homolog from Streptococcus pyogenes serotype M6 (strain ATCC BAA-946 / MGAS10394).